Here is a 352-residue protein sequence, read N- to C-terminus: DNA polymerase IV (352 aa).

Positions 4–185 constitute a UmuC domain; that stretch reads IIHVDMDCFF…LPLSKIPGVG (182 aa). Asp8 and Asp103 together coordinate Mg(2+). The active site involves Glu104.

This sequence belongs to the DNA polymerase type-Y family. Monomer. The cofactor is Mg(2+).

It localises to the cytoplasm. The enzyme catalyses DNA(n) + a 2'-deoxyribonucleoside 5'-triphosphate = DNA(n+1) + diphosphate. Its function is as follows. Poorly processive, error-prone DNA polymerase involved in untargeted mutagenesis. Copies undamaged DNA at stalled replication forks, which arise in vivo from mismatched or misaligned primer ends. These misaligned primers can be extended by PolIV. Exhibits no 3'-5' exonuclease (proofreading) activity. May be involved in translesional synthesis, in conjunction with the beta clamp from PolIII. This Yersinia enterocolitica serotype O:8 / biotype 1B (strain NCTC 13174 / 8081) protein is DNA polymerase IV.